We begin with the raw amino-acid sequence, 396 residues long: Flavohemoprotein (396 aa).

Positions 1–136 (MLDAQTIATV…LANVFIHREA (136 aa)) constitute a Globin domain. His-85 contributes to the heme b binding site. Active-site charge relay system residues include Tyr-95 and Glu-135. The tract at residues 147–396 (GGWEGTRPFR…YECFGPHKVL (250 aa)) is reductase. The FAD-binding FR-type domain occupies 150-255 (EGTRPFRIVA…AAPAGDFFMN (106 aa)). FAD-binding positions include Tyr-188 and 204–207 (RQYS). NADP(+) is bound at residue 268 to 273 (GVGQTP). 389 to 392 (CFGP) lines the FAD pocket.

This sequence belongs to the globin family. Two-domain flavohemoproteins subfamily. It in the C-terminal section; belongs to the flavoprotein pyridine nucleotide cytochrome reductase family. Monomer. Heme b serves as cofactor. Requires FAD as cofactor.

The catalysed reaction is 2 nitric oxide + NADPH + 2 O2 = 2 nitrate + NADP(+) + H(+). The enzyme catalyses 2 nitric oxide + NADH + 2 O2 = 2 nitrate + NAD(+) + H(+). In terms of biological role, is involved in NO detoxification in an aerobic process, termed nitric oxide dioxygenase (NOD) reaction that utilizes O(2) and NAD(P)H to convert NO to nitrate, which protects the bacterium from various noxious nitrogen compounds. Therefore, plays a central role in the inducible response to nitrosative stress. This Salmonella typhimurium (strain LT2 / SGSC1412 / ATCC 700720) protein is Flavohemoprotein (hmp).